We begin with the raw amino-acid sequence, 145 residues long: D-aminoacyl-tRNA deacylase (145 aa).

The Gly-cisPro motif, important for rejection of L-amino acids signature appears at 137 to 138 (GP).

This sequence belongs to the DTD family. As to quaternary structure, homodimer.

Its subcellular location is the cytoplasm. It carries out the reaction glycyl-tRNA(Ala) + H2O = tRNA(Ala) + glycine + H(+). It catalyses the reaction a D-aminoacyl-tRNA + H2O = a tRNA + a D-alpha-amino acid + H(+). Functionally, an aminoacyl-tRNA editing enzyme that deacylates mischarged D-aminoacyl-tRNAs. Also deacylates mischarged glycyl-tRNA(Ala), protecting cells against glycine mischarging by AlaRS. Acts via tRNA-based rather than protein-based catalysis; rejects L-amino acids rather than detecting D-amino acids in the active site. By recycling D-aminoacyl-tRNA to D-amino acids and free tRNA molecules, this enzyme counteracts the toxicity associated with the formation of D-aminoacyl-tRNA entities in vivo and helps enforce protein L-homochirality. This Pectobacterium carotovorum subsp. carotovorum (strain PC1) protein is D-aminoacyl-tRNA deacylase.